Here is a 255-residue protein sequence, read N- to C-terminus: Indole-3-glycerol phosphate synthase (255 aa).

Belongs to the TrpC family.

The enzyme catalyses 1-(2-carboxyphenylamino)-1-deoxy-D-ribulose 5-phosphate + H(+) = (1S,2R)-1-C-(indol-3-yl)glycerol 3-phosphate + CO2 + H2O. Its pathway is amino-acid biosynthesis; L-tryptophan biosynthesis; L-tryptophan from chorismate: step 4/5. The protein is Indole-3-glycerol phosphate synthase of Streptococcus gordonii (strain Challis / ATCC 35105 / BCRC 15272 / CH1 / DL1 / V288).